The following is a 791-amino-acid chain: Interleukin-17 receptor C (791 aa).

The signal sequence occupies residues 1-20 (MPVPWFLLSLALGRSPVVLS). Topologically, residues 21 to 538 (LERLVGPQDA…CPMDKYIHKR (518 aa)) are extracellular. N-linked (GlcNAc...) asparagine glycans are attached at residues asparagine 189 and asparagine 257. Cysteine 265 and cysteine 277 are joined by a disulfide. Residues asparagine 284, asparagine 297, asparagine 324, and asparagine 334 are each glycosylated (N-linked (GlcNAc...) asparagine). 3 disulfide bridges follow: cysteine 341–cysteine 391, cysteine 343–cysteine 359, and cysteine 400–cysteine 409. 3 N-linked (GlcNAc...) asparagine glycosylation sites follow: asparagine 420, asparagine 443, and asparagine 477. Cysteine 439 and cysteine 453 form a disulfide bridge. 2 disulfide bridges follow: cysteine 481–cysteine 488 and cysteine 515–cysteine 529. Residues 539–559 (WALVWLACLLFAAALSLILLL) traverse the membrane as a helical segment. At 560 to 791 (KKDHAKGWLR…GAGPGAGDGT (232 aa)) the chain is on the cytoplasmic side. The SEFIR domain occupies 583–735 (GRAALLLYSA…LPSQLPDFLG (153 aa)). Residues 762–791 (ALDSYFHPPGTPAPGRGVGPGAGPGAGDGT) form a disordered region. A compositionally biased stretch (gly residues) spans 777 to 791 (RGVGPGAGPGAGDGT).

Homodimer; disulfide-linked. Heterodimer with IL17RA. Heterodimerization with IL17RA is independent of the cytoplasmic tail. Associates with non-glycosylated IL17RA constitutively. Binding of IL17A and IL17F induces association with glycosylated IL17RA. Forms complexes with 2:1 binding stoichiometry: two receptor chains for one interleukin molecule. IL17A homodimer preferentially drives the formation of IL17RA-IL17RC heterodimeric receptor complex, whereas IL17F homodimer forms predominantly complexes with IL17RC homodimer. IL17A-IL17F forms complexes with IL17RA-IL17RC, but with lower affinity when compared to IL17A homodimer. IL17RC chain cannot distinguish between IL17A and IL17F molecules, potentially enabling the formation of topologically distinct complexes. Interacts (through SEFIR domain and extended downstream region) with TRAF3IP2/ACT1 (phosphorylated). Expressed in prostate, skeletal muscle, kidney and placenta (at protein level). Expressed in brain, cartilage, colon, heart, intestine, kidney, liver, lung, muscle, placenta, and prostate. Also detected in thyroid, trachea and adrenal gland. Low expression in thymus and leukocytes.

The protein resides in the cell membrane. Receptor for IL17A and IL17F, major effector cytokines of innate and adaptive immune system involved in antimicrobial host defense and maintenance of tissue integrity. Receptor for IL17A and IL17F, major effector cytokines of innate and adaptive immune system involved in antimicrobial host defense and maintenance of tissue integrity. Receptor for IL17A and IL17F homodimers as part of a heterodimeric complex with IL17RA. Receptor for the heterodimer formed by IL17A and IL17B as part of a heterodimeric complex with IL17RA. Has also been shown to be the cognate receptor for IL17F and to bind IL17A with high affinity without the need for IL17RA. Upon binding of IL17F homodimer triggers downstream activation of TRAF6 and NF-kappa-B signaling pathway. Induces transcriptional activation of IL33, a potent cytokine that stimulates group 2 innate lymphoid cells and adaptive T-helper 2 cells involved in pulmonary allergic response to fungi. Promotes sympathetic innervation of peripheral organs by coordinating the communication between gamma-delta T cells and parenchymal cells. Stimulates sympathetic innervation of thermogenic adipose tissue by driving TGFB1 expression. Binding of IL17A-IL17F to IL17RA-IL17RC heterodimeric receptor complex triggers homotypic interaction of IL17RA and IL17RC chains with TRAF3IP2 adapter through SEFIR domains. This leads to downstream TRAF6-mediated activation of NF-kappa-B and MAPkinase pathways ultimately resulting in transcriptional activation of cytokines, chemokines, antimicrobial peptides and matrix metalloproteinases, with potential strong immune inflammation. Primarily induces neutrophil activation and recruitment at infection and inflammatory sites. Stimulates the production of antimicrobial beta-defensins DEFB1, DEFB103A, and DEFB104A by mucosal epithelial cells, limiting the entry of microbes through the epithelial barriers. Its function is as follows. Receptor for both IL17A and IL17F. In terms of biological role, does not bind IL17A or IL17F. The chain is Interleukin-17 receptor C (IL17RC) from Homo sapiens (Human).